Reading from the N-terminus, the 1093-residue chain is Regulator of nonsense transcripts 1 homolog (1093 aa).

The segment at 42–79 is disordered; the sequence is YGVYGGRGPRGNGRRRHDDDDNETEVLDDDDDESLASV. Positions 61–75 are enriched in acidic residues; that stretch reads DDNETEVLDDDDDES. One can recognise a Upf1 CH-rich domain in the interval 95-252; sequence EKELPPHACA…AKLEEMWKEA (158 aa). Residues cysteine 103, cysteine 106, cysteine 117, cysteine 120, cysteine 125, histidine 135, histidine 139, histidine 145, cysteine 163, cysteine 166, cysteine 189, and cysteine 193 each contribute to the Zn(2+) site. The C3H stretch occupies residues 103 to 135; that stretch reads CAYCGIHSPSSVVKCLTCNKWFCSAKGSAFSSH. Positions 117 to 145 are CC/SHH/C; the sequence is CLTCNKWFCSAKGSAFSSHIVNHLVRARH. Positions 163 to 193 are C4; that stretch reads CYNCGTKNVFILGFIPAKSDTVVVLLCRQPC. ATP contacts are provided by residues glutamine 460, 480-484, glutamine 650, tyrosine 687, and glutamate 818; that span reads GTGKT.

It belongs to the DNA2/NAM7 helicase family.

The protein resides in the cytoplasm. The enzyme catalyses ATP + H2O = ADP + phosphate + H(+). RNA-dependent helicase required for nonsense-mediated decay (NMD) of aberrant mRNAs containing premature stop codons and modulates the expression level of normal mRNAs. Also capable of unwinding double-stranded DNA and translocating on single-stranded DNA. This is Regulator of nonsense transcripts 1 homolog from Neurospora crassa (strain ATCC 24698 / 74-OR23-1A / CBS 708.71 / DSM 1257 / FGSC 987).